The chain runs to 272 residues: Putative hydro-lyase BBta_2883 (272 aa).

The protein belongs to the D-glutamate cyclase family.

The sequence is that of Putative hydro-lyase BBta_2883 from Bradyrhizobium sp. (strain BTAi1 / ATCC BAA-1182).